The following is a 402-amino-acid chain: B box and SPRY domain-containing protein (402 aa).

The segment at 1–20 (MSAEGAEPGPGSGSGPGPGP) is disordered. A B box-type zinc finger spans residues 17 to 65 (GPGPLCPEHGQALSWFCGSERRPVCAACAGLGGRCRGHRIRRAEERAEE). Residues 212 to 402 (PLLTQLWATA…VADQTISIVR (191 aa)) enclose the B30.2/SPRY domain.

As to quaternary structure, interacts with TRPV5 and TRPV6. Interacts with YWHAZ/14-3-3 protein zeta.

It is found in the cytoplasm. It localises to the membrane. Its function is as follows. May regulate epithelial calcium transport by inhibiting TRPV5 activity. This Homo sapiens (Human) protein is B box and SPRY domain-containing protein (BSPRY).